The following is a 103-amino-acid chain: MYAVFQSGGKQHRVAEGHTVRLEKIEVATGETIEFDQVLLVADGENVKVGAPLVAGGKVVATVVAHGRGEKVTIQKFRRRKHHEKKMGHRQWFTEVKITAINA.

This sequence belongs to the bacterial ribosomal protein bL21 family. As to quaternary structure, part of the 50S ribosomal subunit. Contacts protein L20.

Functionally, this protein binds to 23S rRNA in the presence of protein L20. This chain is Large ribosomal subunit protein bL21, found in Shewanella amazonensis (strain ATCC BAA-1098 / SB2B).